We begin with the raw amino-acid sequence, 337 residues long: MGATIIVGGFWGDEGKGKIVAHVAHSDKPVIIARGGVGPNAGHTVEIDGQKFGVRMIPSGFVYKDAKLLIGAGVLVNPEVFLKEVELLKVGDRARVDYRCAIIEPKHIEADKGSEHLSKKIGTTGTGCGPANVDRVNRVAKQAKDIPELKDYLADVPLEVNQAIENGQFVLIEGSQGFGLSLYYGTYPYVTSKDTTASAIASDVGVGPTRVDDVIVVFKCFPTRVGAGPFPTEMPQEEAEKLGIVEYGTVTGRRRRIGYWDGEFARYSAMVNGATQVAITGVDKLDKECYGVTEWEKLTPKAKKFIEQVEEDVRVPVTLISTGPELKQIIDLRKEKL.

Residues 12–18 (GDEGKGK) and 42–44 (GHT) contribute to the GTP site. The active-site Proton acceptor is D13. Mg(2+)-binding residues include D13 and G42. IMP contacts are provided by residues 13-16 (DEGK), 40-43 (NAGH), T124, R138, Q176, T191, and R253. H43 acts as the Proton donor in catalysis. 249 to 255 (TVTGRRR) is a substrate binding site. GTP-binding positions include R255, 281–283 (GVD), and 321–323 (STG).

The protein belongs to the adenylosuccinate synthetase family. Homodimer. Requires Mg(2+) as cofactor.

The protein localises to the cytoplasm. The catalysed reaction is IMP + L-aspartate + GTP = N(6)-(1,2-dicarboxyethyl)-AMP + GDP + phosphate + 2 H(+). It participates in purine metabolism; AMP biosynthesis via de novo pathway; AMP from IMP: step 1/2. Plays an important role in the de novo pathway of purine nucleotide biosynthesis. Catalyzes the first committed step in the biosynthesis of AMP from IMP. In Archaeoglobus fulgidus (strain ATCC 49558 / DSM 4304 / JCM 9628 / NBRC 100126 / VC-16), this protein is Adenylosuccinate synthetase.